Here is a 295-residue protein sequence, read N- to C-terminus: sn-glycerol-3-phosphate transport system permease protein UgpA (295 aa).

The Cytoplasmic segment spans residues 1–11 (MSPSRPGFSCS). A helical membrane pass occupies residues 12–32 (WLPYLLVLPQLAITAIFFLWP). At 33–80 (AGEALWYSVQTLDPFGLSSEFVGLSNFIQLFQDEYYLASFYTTLIFSA) the chain is on the periplasmic side. The region spanning 72 to 284 (FYTTLIFSAL…LLVIGLTVIQ (213 aa)) is the ABC transmembrane type-1 domain. Residues 81-101 (LVAGIGLIVSLFLAAMVNYVL) form a helical membrane-spanning segment. Residues 102–109 (RGSRLYQT) lie on the Cytoplasmic side of the membrane. A helical transmembrane segment spans residues 110–130 (LLILPYAVAPAVAAVLWIFLF). At 131 to 157 (DPGLGLITHALAKLGYSWNHAQNSGQA) the chain is on the periplasmic side. Residues 158 to 178 (MFLVVLASVWKQISYNFLFFL) traverse the membrane as a helical segment. The Cytoplasmic segment spans residues 179–207 (AALQSIPKSLVEAAAIDGAGPVRRFFNLV). A helical transmembrane segment spans residues 208-228 (LPLISPVSFFLLVVNLVYAFF). The Periplasmic portion of the chain corresponds to 229 to 262 (DTFPVIDAATGGGPVQATTTLIYKIYREGFAGLD). The chain crosses the membrane as a helical span at residues 263–283 (LSSSAAQSVILMLLVIGLTVI). At 284–295 (QFRFVERKVRYQ) the chain is on the cytoplasmic side.

The protein belongs to the binding-protein-dependent transport system permease family. UgpAE subfamily. The complex is composed of two ATP-binding proteins (UgpC), two transmembrane proteins (UgpA and UgpE) and a solute-binding protein (UgpB).

The protein resides in the cell inner membrane. Functionally, part of the ABC transporter complex UgpBAEC involved in sn-glycerol-3-phosphate (G3P) import. Probably responsible for the translocation of the substrate across the membrane. This Yersinia pestis bv. Antiqua (strain Antiqua) protein is sn-glycerol-3-phosphate transport system permease protein UgpA (ugpA).